A 350-amino-acid chain; its full sequence is tRNA uridine(34) hydroxylase (350 aa).

Residues 146 to 240 (DDPDAVFIDM…YARRAREQGL (95 aa)) enclose the Rhodanese domain. The active-site Cysteine persulfide intermediate is cysteine 200. Over residues 319 to 328 (RRRRAGRENG) the composition is skewed to basic and acidic residues. Positions 319 to 350 (RRRRAGRENGNKIFNKSRGRLNSKLSIPDPAE) are disordered.

This sequence belongs to the TrhO family.

It catalyses the reaction uridine(34) in tRNA + AH2 + O2 = 5-hydroxyuridine(34) in tRNA + A + H2O. Catalyzes oxygen-dependent 5-hydroxyuridine (ho5U) modification at position 34 in tRNAs. The chain is tRNA uridine(34) hydroxylase from Salmonella gallinarum (strain 287/91 / NCTC 13346).